A 346-amino-acid polypeptide reads, in one-letter code: Zinc finger CCCH domain-containing protein 28 (346 aa).

The tract at residues 1-99 (MASAETPNPD…SPRYPDGKRR (99 aa)) is disordered. The segment covering 17–41 (DAAAAADPAAAAPAAAATDPAAAGS) has biased composition (low complexity). Positions 62-86 (RSSRSRSRSPRRGRSRSRSRSRSRG) are enriched in basic residues. C3H1-type zinc fingers lie at residues 103 to 131 (DLNV…HPHP), 138 to 165 (DSKV…HPPP), 181 to 209 (KVKM…HHSP), 211 to 237 (EDCA…HVMA), 282 to 308 (NYGV…HPDL), and 314 to 340 (NTQV…HPPA).

This chain is Zinc finger CCCH domain-containing protein 28, found in Oryza sativa subsp. japonica (Rice).